Reading from the N-terminus, the 945-residue chain is MSLTTAAPLLALLRENQDSVKTYALESINNVVDQLWSEISNELPDIEALYDDDTFSDREMAALIASKVYYNLGEYESAVKYALAAKDRFDIDEKSQFVETIVSKSIEMYVQEASKQYTKDEQFYTKDIIDPKLTSIFERMIEKCLKASELKLALGIALEGYRLDIIESALKSKLDQDSTSENVKIINYLLTLAITTVTNSKFRSSILRKSFDFLMNMPNCDYLTLNKVVVNLNDAGLALQLFKKLKEENDEGLSAQIAFDLVSSASQQLLEILVTELTAQGYDPALLNILSGLPTCDYYNTFLLNNKNIDIGLLNKSKSSLDGKFSLFHTAVSVANGFMHAGTTDNSFIKANLPWLGKAQNWAKFTATASLGVIHKGNLLEGKKVMAPYLPGSRASSRFIKGGSLYGLGLIYAGFGRDTTDYLKNIIVENSGTSGDEDVDVLLHGASLGIGLAAMGSANIEVYEALKEVLYNDSATSGEAAALGMGLCMLGTGKPEAIHDMFTYSQETQHGNITRGLAVGLALINYGRQELADDLITKMLASDESLLRYGGAFTIALAYAGTGNNSAVKRLLHVAVSDSNDDVRRAAVIALGFVLLRDYTTVPRIVQLLSKSHNAHVRCGTAFALGIACAGKGLQSAIDVLDPLTKDPVDFVRQAAMIALSMILIQQTEKLNPQVADINKNFLSVITNKHQEGLAKFGACVAQGIMNAGGRNVTIQLENADTGTLDTKSVVGLVMFSQFWYWFPLAHFLSLSFTPTTVIGIRGSDQAIPKFQMNCYAKEDAFSYPRMYEEASGKEVEKVATAVLSTTARAKARAKKTKKEKGPNEEEKKKEHEEKEKERETNKKGIKETKENDEEFYKNKYSSKPYKVDNMTRILPQQSRYISFIKDDRFVPVRKFKGNNGVVVLRDREPKEPVALIETVRQMKDVNAPLPTPFKVDDNVDFPSA.

Ser2 bears the N-acetylserine mark. PC repeat units follow at residues 366–399, 403–440, 445–479, 480–514, 516–549, 550–585, 586–618, 620–654, 655–692, and 698–734; these read TATASLGVIHKGNLLEGKKVMAPYLPGSRASSRF, GSLYGLGLIYAGFGRDTTDYLKNIIVENSGTSGDEDVD, GASLGIGLAAMGSANIEVYEALKEVLYNDSATSGE, AAALGMGLCMLGTGKPEAIHDMFTYSQETQHGNIT, GLAVGLALINYGRQELADDLITKMLASDESLLRY, GGAFTIALAYAGTGNNSAVKRLLHVAVSDSNDDVRR, AAVIALGFVLLRDYTTVPRIVQLLSKSHNAHVR, GTAFALGIACAGKGLQSAIDVLDPLTKDPVDFVRQ, AAMIALSMILIQQTEKLNPQVADINKNFLSVITNKHQE, and GACVAQGIMNAGGRNVTIQLENADTGTLDTKSVVGLV. Thr801 bears the Phosphothreonine mark. Over residues 810–819 the composition is skewed to basic residues; the sequence is AKARAKKTKK. The segment at 810-851 is disordered; the sequence is AKARAKKTKKEKGPNEEEKKKEHEEKEKERETNKKGIKETKE. Positions 820 to 851 are enriched in basic and acidic residues; the sequence is EKGPNEEEKKKEHEEKEKERETNKKGIKETKE. Phosphothreonine is present on Thr932.

This sequence belongs to the proteasome subunit S1 family. Interacts with UBR1. N-acetylated by NAT1.

In terms of biological role, acts as a regulatory subunit of the 26S proteasome which is involved in the ATP-dependent degradation of ubiquitinated proteins. This chain is 26S proteasome regulatory subunit RPN2 (RPN2), found in Saccharomyces cerevisiae (strain ATCC 204508 / S288c) (Baker's yeast).